A 154-amino-acid polypeptide reads, in one-letter code: AP-1 complex subunit sigma-2 (154 aa).

This sequence belongs to the adaptor complexes small subunit family. As to quaternary structure, adaptor protein complex 1 (AP-1) is a heterotetramer composed of two large adaptins (gamma-type subunit and beta-type subunit), a medium adaptin (mu-type subunit) and a small adaptin (sigma-type subunit).

Its subcellular location is the golgi apparatus. It is found in the trans-Golgi network. It localises to the cytoplasmic vesicle. The protein resides in the clathrin-coated vesicle membrane. In terms of biological role, subunit of clathrin-associated adaptor protein complex 1 that plays a role in protein sorting in the trans-Golgi network (TGN) and endosomes. The AP complexes mediate the recruitment of clathrin to membranes and the recognition of sorting signals within the cytosolic tails of transmembrane cargo molecules. Also involved in early steps of phagocytosis and macropinocytosis. The protein is AP-1 complex subunit sigma-2 (ap1s2) of Dictyostelium discoideum (Social amoeba).